The following is a 719-amino-acid chain: Putative alpha-1,3-mannosyltransferase MNT4 (719 aa).

At 1-4 the chain is on the cytoplasmic side; that stretch reads MKFH. Residues 5 to 22 form a helical membrane-spanning segment; sequence LKRYVIVTSILLSFFLLF. Residues 23-719 are Lumenal-facing; that stretch reads RRQFLPLTQR…KKLIEIWLQD (697 aa). 3 N-linked (GlcNAc...) asparagine glycosylation sites follow: Asn-148, Asn-273, and Asn-449.

It belongs to the MNN1/MNT family.

The protein localises to the golgi apparatus membrane. The protein operates within protein modification; protein glycosylation. Functionally, responsible for addition of the terminal mannose residues to the outer chain of core N-linked polysaccharides and to O-linked mannotriose. Implicated in late Golgi modifications. In Candida albicans (strain SC5314 / ATCC MYA-2876) (Yeast), this protein is Putative alpha-1,3-mannosyltransferase MNT4 (MNT4).